Reading from the N-terminus, the 141-residue chain is Cell division protein SepF (141 aa).

The protein belongs to the SepF family. Homodimer. Interacts with FtsZ.

It localises to the cytoplasm. Functionally, cell division protein that is part of the divisome complex and is recruited early to the Z-ring. Probably stimulates Z-ring formation, perhaps through the cross-linking of FtsZ protofilaments. Its function overlaps with FtsA. This is Cell division protein SepF from Anoxybacillus flavithermus (strain DSM 21510 / WK1).